A 239-amino-acid polypeptide reads, in one-letter code: Ribonuclease PH (239 aa).

Phosphate is bound by residues arginine 86 and 124–126 (GTR).

This sequence belongs to the RNase PH family. Homohexameric ring arranged as a trimer of dimers.

The enzyme catalyses tRNA(n+1) + phosphate = tRNA(n) + a ribonucleoside 5'-diphosphate. Functionally, phosphorolytic 3'-5' exoribonuclease that plays an important role in tRNA 3'-end maturation. Removes nucleotide residues following the 3'-CCA terminus of tRNAs; can also add nucleotides to the ends of RNA molecules by using nucleoside diphosphates as substrates, but this may not be physiologically important. Probably plays a role in initiation of 16S rRNA degradation (leading to ribosome degradation) during starvation. This is Ribonuclease PH from Aromatoleum aromaticum (strain DSM 19018 / LMG 30748 / EbN1) (Azoarcus sp. (strain EbN1)).